The primary structure comprises 183 residues: Streptavidin-V2 (183 aa).

The signal sequence occupies residues 1–24 (MRKIVVAAIAVSLTTVGITASASA). The 123-residue stretch at 37 to 159 (AEAGITGTWY…GHDTFTKVKP (123 aa)) folds into the Avidin-like domain. Residues Y67 and Y78 each coordinate biotin. Positions 83-85 (RYD) match the Cell attachment site; atypical motif. Biotin-binding residues include W116, W132, and W144.

It belongs to the avidin/streptavidin family. As to quaternary structure, homotetramer.

The protein resides in the secreted. The biological function of streptavidin is not known. Forms a strong non-covalent specific complex with biotin (one molecule of biotin per subunit of streptavidin). This chain is Streptavidin-V2, found in Streptomyces violaceus (Streptomyces venezuelae).